The following is a 293-amino-acid chain: FAS1 domain-containing protein DEHA2G15708g (293 aa).

The first 18 residues, 1 to 18 (MKLSSILYVSVLAHLVMS), serve as a signal peptide directing secretion. The segment covering 76-87 (DHIGENEKREAK) has biased composition (basic and acidic residues). A disordered region spans residues 76–126 (DHIGENEKREAKNVYNLQSLKEGLDDENDKREGNVNKPEVSEEGSNKGDKR). The FAS1 domain occupies 141-290 (QNLLQSILPQ…GYIFVINDVL (150 aa)).

The protein localises to the vacuole. In Debaryomyces hansenii (strain ATCC 36239 / CBS 767 / BCRC 21394 / JCM 1990 / NBRC 0083 / IGC 2968) (Yeast), this protein is FAS1 domain-containing protein DEHA2G15708g.